Consider the following 125-residue polypeptide: MARIASVNIPDNKRVVVSLTYIYGLGPTMAAEICNKAKISKDKKVKELTDQELIGLRNIIESEYKVEGDLRREVTLNIKKKKDIRCYQGLRHIRKLPVRGQNTHSNARTRKGKAIAIAGKKKAVK.

The protein belongs to the universal ribosomal protein uS13 family. Part of the 30S ribosomal subunit. Forms a loose heterodimer with protein S19. Forms two bridges to the 50S subunit in the 70S ribosome.

Its function is as follows. Located at the top of the head of the 30S subunit, it contacts several helices of the 16S rRNA. In the 70S ribosome it contacts the 23S rRNA (bridge B1a) and protein L5 of the 50S subunit (bridge B1b), connecting the 2 subunits; these bridges are implicated in subunit movement. Contacts the tRNAs in the A and P-sites. The chain is Small ribosomal subunit protein uS13 from Rickettsia rickettsii (strain Iowa).